A 110-amino-acid chain; its full sequence is Large ribosomal subunit protein P2B (110 aa).

Positions 73–88 are enriched in low complexity; the sequence is TPAAGGAAGAEATSAA. Residues 73 to 110 form a disordered region; it reads TPAAGGAAGAEATSAAEEAKEEEAAEESDEDMGFGLFD. Acidic residues predominate over residues 91–104; the sequence is AKEEEAAEESDEDM. Phosphoserine is present on S100.

The protein belongs to the eukaryotic ribosomal protein P1/P2 family. Component of the large ribosomal subunit (LSU). Mature yeast ribosomes consist of a small (40S) and a large (60S) subunit. The 40S small subunit contains 1 molecule of ribosomal RNA (18S rRNA) and at least 33 different proteins. The large 60S subunit contains 3 rRNA molecules (25S, 5.8S and 5S rRNA) and at least 46 different proteins. The acidic ribosomal P-proteins form the stalk structure of the 60S subunit. They are organized as a pentameric complex in which uL10/P0 interacts with 2 heterodimers of P1 and P2 proteins.

It is found in the cytoplasm. Component of the ribosome, a large ribonucleoprotein complex responsible for the synthesis of proteins in the cell. The small ribosomal subunit (SSU) binds messenger RNAs (mRNAs) and translates the encoded message by selecting cognate aminoacyl-transfer RNA (tRNA) molecules. The large subunit (LSU) contains the ribosomal catalytic site termed the peptidyl transferase center (PTC), which catalyzes the formation of peptide bonds, thereby polymerizing the amino acids delivered by tRNAs into a polypeptide chain. The nascent polypeptides leave the ribosome through a tunnel in the LSU and interact with protein factors that function in enzymatic processing, targeting, and the membrane insertion of nascent chains at the exit of the ribosomal tunnel. The protein is Large ribosomal subunit protein P2B (rpp202) of Schizosaccharomyces pombe (strain 972 / ATCC 24843) (Fission yeast).